A 1224-amino-acid chain; its full sequence is Dynactin subunit 1 (1224 aa).

Positions 1-10 (MAQSRRHPHG) are enriched in basic residues. Residues 1 to 30 (MAQSRRHPHGRASSAGPRMSTEASSKPLKV) are disordered. The region spanning 49-91 (GATLXATGKWVGVILDEAKGKNDGTVQGRKYFTCEENHGIFVR) is the CAP-Gly domain. Disordered stretches follow at residues 100-217 (DGAD…RSQV), 374-402 (SASE…RQQR), and 888-918 (PHCH…PPAE). Positions 117-146 (VPKRHSRXAAKGSKLRGAKPKKTTARRPKP) are enriched in basic residues. Residues 148–180 (RTPTSAPSSGTAGPSGSASASGGEMSSSEPSTP) show a composition bias toward low complexity. Residues 205-540 (SPTKEEENLR…QEASAEKQQQ (336 aa)) adopt a coiled-coil conformation. Residues 207–217 (TKEEENLRSQV) show a composition bias toward basic and acidic residues. Coiled coils occupy residues 936-1042 (LKLE…EGLR) and 1081-1117 (KDSP…LELA). Residues 1203-1224 (WCSSSRARASPPASACSPPRPS) form a disordered region. Low complexity predominate over residues 1204–1224 (CSSSRARASPPASACSPPRPS).

Belongs to the dynactin 150 kDa subunit family. As to quaternary structure, monomer and homodimer. Subunit of dynactin, a multiprotein complex part of a tripartite complex with dynein and a adapter, such as BICDL1, BICD2 or HOOK3. The dynactin complex is built around ACTR1A/ACTB filament and consists of an actin-related filament composed of a shoulder domain, a pointed end and a barbed end. Its length is defined by its flexible shoulder domain. The soulder is composed of 2 DCTN1 subunits, 4 DCTN2 and 2 DCTN3. DCTN1/p150(glued) binds directly to microtubules and to cytoplasmic dynein. In terms of tissue distribution, ubiquitously expressed.

The protein resides in the cytoplasm. It is found in the cytoskeleton. The protein localises to the microtubule organizing center. It localises to the centrosome. Its subcellular location is the centriole. The protein resides in the spindle. It is found in the cell cortex. In terms of biological role, part of the dynactin complex that activates the molecular motor dynein for ultra-processive transport along microtubules. Plays a key role in dynein-mediated retrograde transport of vesicles and organelles along microtubules by recruiting and tethering dynein to microtubules. Binds to both dynein and microtubules providing a link between specific cargos, microtubules and dynein. Essential for targeting dynein to microtubule plus ends, recruiting dynein to membranous cargos and enhancing dynein processivity (the ability to move along a microtubule for a long distance without falling off the track). Can also act as a brake to slow the dynein motor during motility along the microtubule. Can regulate microtubule stability by promoting microtubule formation, nucleation and polymerization and by inhibiting microtubule catastrophe in neurons. Inhibits microtubule catastrophe by binding both to microtubules and to tubulin, leading to enhanced microtubule stability along the axon. Plays a role in metaphase spindle orientation. Plays a role in centriole cohesion and subdistal appendage organization and function. Its recruitment to the centriole in a KIF3A-dependent manner is essential for the maintenance of centriole cohesion and the formation of subdistal appendage. Also required for microtubule anchoring at the mother centriole. Plays a role in primary cilia formation. The sequence is that of Dynactin subunit 1 (DCTN1) from Gallus gallus (Chicken).